We begin with the raw amino-acid sequence, 99 residues long: Nucleoid-associated protein SSA_0326 (99 aa).

A compositionally biased stretch (low complexity) spans 1–15; that stretch reads MMNMQSMMKQAQKLQ. The tract at residues 1 to 23 is disordered; the sequence is MMNMQSMMKQAQKLQKQMEKGQA.

Belongs to the YbaB/EbfC family. As to quaternary structure, homodimer.

Its subcellular location is the cytoplasm. It localises to the nucleoid. Functionally, binds to DNA and alters its conformation. May be involved in regulation of gene expression, nucleoid organization and DNA protection. This chain is Nucleoid-associated protein SSA_0326, found in Streptococcus sanguinis (strain SK36).